The chain runs to 564 residues: MYAVATWLCFGSTSGWSFTLEDNNIFPKQYPIINFTTADATVESYTNFIRAVRSHLTTGADVRHEIPVLPNRVGLPISQRFILVELSNHAELSVTLALDVTNAYVVGCRAGNSAYFFHPDNQEDAEAITHLFTDVQNSFTFAFGGNYDRLEQLGGLRENIELGTGPLEDAISALYYYSTCGTQIPTLARSFMVCIQMISEAARFQYIEGEMRTRIRYNRRSAPDPSVITLENSWGRLSTAIQESNQGAFASPIQLQRRNGSKFNVYDVSILIPIIALMVYRCAPPPSSQFSLLIRPVVPNFNADVCMDPEPIVRIVGRNGLCVDVTGEEFFDGNPIQLWPCKSNTDWNQLWTLRKDSTIRSNGKCLTISKSSPRQQVVIYNCSTATVGATRWQIWDNRTIINPRSGLVLAATSGNSGTKLTVQTNIYAVSQGWLPTNNTQPFVTTIVGLYGMCLQANSGKVWLEDCTSEKAEQQWALYADGSIRPQQNRDNCLTTDANIKGTVVKILSCGPASSGQRWMFKNDGTILNLYNGLVLDVRRSDPSLKQIIVHPFHGNLNQIWLPLF.

Residues 1 to 24 (MYAVATWLCFGSTSGWSFTLEDNN) form the signal peptide. 32–34 (IIN) provides a ligand contact to beta-D-galactose. Residue Asn-34 is glycosylated (N-linked (GlcNAc...) asparagine). Active-site residues include Tyr-104, Tyr-147, Glu-200, and Arg-203. AMP contacts are provided by residues 104-105 (YV) and 145-147 (GNY). Asn-259 carries N-linked (GlcNAc...) asparagine glycosylation. A disulfide bond links Cys-282 and Cys-306. A propeptide spans 291–302 (SLLIRPVVPNFN) (linker peptide). A Ricin B-type lectin 1 domain is found at 309 to 436 (PEPIVRIVGR…YAVSQGWLPT (128 aa)). Beta-D-galactose is bound by residues Ile-312, 324 to 328 (DVTGE), Gln-337, Lys-342, and Asn-348. A 1-alpha repeat occupies 319-361 (NGLCVDVTGEEFFDGNPIQLWPCKSNTDWNQLWTLRKDSTIRS). Cys-322 and Cys-341 form a disulfide bridge. Residues 362 to 402 (NGKCLTISKSSPRQQVVIYNCSTATVGATRWQIWDNRTIIN) form a 1-beta repeat. Cys-365 and Cys-382 form a disulfide bridge. Asn-397 and Asn-437 each carry an N-linked (GlcNAc...) asparagine glycan. The stretch at 405–437 (SGLVLAATSGNSGTKLTVQTNIYAVSQGWLPTN) is one 1-gamma repeat. Residue Asn-437 participates in beta-D-galactose binding. The 125-residue stretch at 439 to 563 (TQPFVTTIVG…GNLNQIWLPL (125 aa)) folds into the Ricin B-type lectin 2 domain. A 2-alpha repeat occupies 450 to 485 (YGMCLQANSGKVWLEDCTSEKAEQQWALYADGSIRP). Cystine bridges form between Cys-453-Cys-466 and Cys-492-Cys-509. A 2-beta repeat occupies 489–528 (RDNCLTTDANIKGTVVKILSCGPASSGQRWMFKNDGTILN). The 2-gamma repeat unit spans residues 531 to 558 (NGLVLDVRRSDPSLKQIIVHPFHGNLNQ).

This sequence in the N-terminal section; belongs to the ribosome-inactivating protein family. Type 2 RIP subfamily.

It carries out the reaction Endohydrolysis of the N-glycosidic bond at one specific adenosine on the 28S rRNA.. This Ricinus communis (Castor bean) protein is Agglutinin.